Reading from the N-terminus, the 481-residue chain is Cysteine--tRNA ligase (481 aa).

Cys29 serves as a coordination point for Zn(2+). A 'HIGH' region motif is present at residues Val31–His41. Positions 209, 234, and 238 each coordinate Zn(2+). The short motif at Lys266–Ser270 is the 'KMSKS' region element. Lys269 serves as a coordination point for ATP.

It belongs to the class-I aminoacyl-tRNA synthetase family. Monomer. Zn(2+) is required as a cofactor.

It is found in the cytoplasm. The catalysed reaction is tRNA(Cys) + L-cysteine + ATP = L-cysteinyl-tRNA(Cys) + AMP + diphosphate. The protein is Cysteine--tRNA ligase of Geobacter sulfurreducens (strain ATCC 51573 / DSM 12127 / PCA).